The sequence spans 357 residues: DNA replication and repair protein RecF (357 aa).

31-38 (GQNGAGKT) serves as a coordination point for ATP.

The protein belongs to the RecF family.

It is found in the cytoplasm. The RecF protein is involved in DNA metabolism; it is required for DNA replication and normal SOS inducibility. RecF binds preferentially to single-stranded, linear DNA. It also seems to bind ATP. The polypeptide is DNA replication and repair protein RecF (Coxiella burnetii (strain RSA 493 / Nine Mile phase I)).